Consider the following 333-residue polypeptide: Glycerol-3-phosphate dehydrogenase [NAD(P)+] (333 aa).

Residues serine 10, tryptophan 11, and lysine 105 each contribute to the NADPH site. Positions 105, 136, and 138 each coordinate sn-glycerol 3-phosphate. Position 140 (alanine 140) interacts with NADPH. Residues lysine 191, aspartate 244, serine 254, arginine 255, and asparagine 256 each coordinate sn-glycerol 3-phosphate. Catalysis depends on lysine 191, which acts as the Proton acceptor. Position 255 (arginine 255) interacts with NADPH. Residues valine 279 and glutamate 281 each contribute to the NADPH site.

Belongs to the NAD-dependent glycerol-3-phosphate dehydrogenase family.

It localises to the cytoplasm. It catalyses the reaction sn-glycerol 3-phosphate + NAD(+) = dihydroxyacetone phosphate + NADH + H(+). The catalysed reaction is sn-glycerol 3-phosphate + NADP(+) = dihydroxyacetone phosphate + NADPH + H(+). Its pathway is membrane lipid metabolism; glycerophospholipid metabolism. In terms of biological role, catalyzes the reduction of the glycolytic intermediate dihydroxyacetone phosphate (DHAP) to sn-glycerol 3-phosphate (G3P), the key precursor for phospholipid synthesis. This chain is Glycerol-3-phosphate dehydrogenase [NAD(P)+], found in Trichlorobacter lovleyi (strain ATCC BAA-1151 / DSM 17278 / SZ) (Geobacter lovleyi).